Here is a 199-residue protein sequence, read N- to C-terminus: Interleukin-11 (199 aa).

The N-terminal stretch at 1 to 21 (MNCVCRLVLVVLSLWPDRVVA) is a signal peptide. The interval 182–190 (HLTLDWAVR) is important for interaction with IL11RA and for the stimulation of cell proliferation.

The protein belongs to the IL-6 superfamily. In terms of assembly, interacts with IL11RA to associate with IL6ST, giving rise to a multimeric signaling complex.

It is found in the secreted. Functionally, cytokine that stimulates the proliferation of hematopoietic stem cells and megakaryocyte progenitor cells and induces megakaryocyte maturation resulting in increased platelet production. Also promotes the proliferation of hepatocytes in response to liver damage. Binding to its receptor formed by IL6ST and IL11RA activates a signaling cascade that promotes cell proliferation. Signaling leads to the activation of intracellular protein kinases and the phosphorylation of STAT3. The interaction with the membrane-bound IL11RA and IL6ST stimulates 'classic signaling', whereas the binding of IL11 and soluble IL11RA to IL6ST stimulates 'trans-signaling'. This is Interleukin-11 from Rattus norvegicus (Rat).